Reading from the N-terminus, the 105-residue chain is Molt-inhibiting hormone (105 aa).

The N-terminal stretch at methionine 1–alanine 28 is a signal peptide. Disulfide bonds link cysteine 35–cysteine 72, cysteine 52–cysteine 68, and cysteine 55–cysteine 81.

The protein belongs to the arthropod CHH/MIH/GIH/VIH hormone family. As to expression, produced by the medulla terminalis X-organ in the eyestalks and transported to the sinus gland where it is stored and released.

It is found in the secreted. Functionally, inhibits Y-organs where molting hormone (ecdysteroid) is secreted. A molting cycle is initiated when MIH secretion diminishes or stops. Has little or no hyperglycemic activity. The protein is Molt-inhibiting hormone of Penaeus japonicus (Kuruma prawn).